The sequence spans 766 residues: Dipeptidyl peptidase 4 (766 aa).

The Cytoplasmic segment spans residues 1–6 (MKTPWK). Residues 7-27 (VLLGLLGIAALVTVITVPVVL) form a helical; Signal-anchor for type II membrane protein membrane-spanning segment. The Extracellular portion of the chain corresponds to 28–766 (LNKGTDDAAA…HFLKQCFSLP (739 aa)). N-linked (GlcNAc...) asparagine glycosylation is found at Asn-85, Asn-92, Asn-150, Asn-179, Asn-219, Asn-229, Asn-279, and Asn-321. 3 cysteine pairs are disulfide-bonded: Cys-385–Cys-394, Cys-444–Cys-447, and Cys-454–Cys-472. Ser-630 functions as the Charge relay system in the catalytic mechanism. Cysteines 649 and 762 form a disulfide. An N-linked (GlcNAc...) asparagine glycan is attached at Asn-685. Active-site charge relay system residues include Asp-708 and His-740.

The protein belongs to the peptidase S9B family. DPPIV subfamily. As to quaternary structure, monomer. Homodimer. Heterodimer with Seprase (FAP). Requires homodimerization for optimal dipeptidyl peptidase activity and T-cell costimulation. Found in a membrane raft complex, at least composed of BCL10, CARD11, DPP4 and IKBKB. Associates with collagen. Interacts with PTPRC; the interaction is enhanced in an interleukin-12-dependent manner in activated lymphocytes. Interacts (via extracellular domain) with ADA; does not inhibit its dipeptidyl peptidase activity. Interacts with CAV1 (via the N-terminus); the interaction is direct. Interacts (via cytoplasmic tail) with CARD11 (via PDZ domain); its homodimerization is necessary for interaction with CARD11. Interacts with IGF2R; the interaction is direct. Interacts with GPC3. Post-translationally, the soluble form (Dipeptidyl peptidase 4 soluble form also named SDPP) derives from the membrane form (Dipeptidyl peptidase 4 membrane form also named MDPP) by proteolytic processing. N- and O-Glycosylated. In terms of processing, phosphorylated. Mannose 6-phosphate residues in the carbohydrate moiety are necessary for interaction with IGF2R in activated T-cells. Mannose 6-phosphorylation is induced during T-cell activation.

Its subcellular location is the secreted. The protein localises to the cell membrane. It localises to the apical cell membrane. It is found in the cell projection. The protein resides in the invadopodium membrane. Its subcellular location is the lamellipodium membrane. The protein localises to the cell junction. It localises to the membrane raft. It carries out the reaction Release of an N-terminal dipeptide, Xaa-Yaa-|-Zaa-, from a polypeptide, preferentially when Yaa is Pro, provided Zaa is neither Pro nor hydroxyproline.. Inhibited by GPC3 and diprotin A. Functionally, cell surface glycoprotein receptor involved in the costimulatory signal essential for T-cell receptor (TCR)-mediated T-cell activation. Acts as a positive regulator of T-cell coactivation, by binding at least ADA, CAV1, IGF2R, and PTPRC. Its binding to CAV1 and CARD11 induces T-cell proliferation and NF-kappa-B activation in a T-cell receptor/CD3-dependent manner. Its interaction with ADA also regulates lymphocyte-epithelial cell adhesion. In association with FAP is involved in the pericellular proteolysis of the extracellular matrix (ECM), the migration and invasion of endothelial cells into the ECM. May be involved in the promotion of lymphatic endothelial cells adhesion, migration and tube formation. When overexpressed, enhanced cell proliferation, a process inhibited by GPC3. Also acts as a serine exopeptidase with a dipeptidyl peptidase activity that regulates various physiological processes by cleaving peptides in the circulation, including many chemokines, mitogenic growth factors, neuropeptides and peptide hormones such as brain natriuretic peptide 32. Removes N-terminal dipeptides sequentially from polypeptides having unsubstituted N-termini provided that the penultimate residue is proline. The chain is Dipeptidyl peptidase 4 (DPP4) from Sus scrofa (Pig).